Consider the following 260-residue polypeptide: Snake venom serine protease 2 (260 aa).

The N-terminal stretch at Met1–Ala18 is a signal peptide. Residues Gln19 to Leu24 constitute a propeptide that is removed on maturation. Positions Ile25–Ala251 constitute a Peptidase S1 domain. 6 disulfides stabilise this stretch: Cys31–Cys165, Cys52–Cys68, Cys100–Cys258, Cys144–Cys212, Cys176–Cys191, and Cys202–Cys227. N-linked (GlcNAc...) asparagine glycans are attached at residues Asn123 and Asn124.

This sequence belongs to the peptidase S1 family. Snake venom subfamily. Monomer. In terms of tissue distribution, expressed by the venom gland.

The protein localises to the secreted. In terms of biological role, snake venom serine protease that may act in the hemostasis system of the prey. In Protobothrops flavoviridis (Habu), this protein is Snake venom serine protease 2 (TLF2).